Reading from the N-terminus, the 121-residue chain is Large ribosomal subunit protein bL12 (121 aa).

Belongs to the bacterial ribosomal protein bL12 family. Homodimer. Part of the ribosomal stalk of the 50S ribosomal subunit. Forms a multimeric L10(L12)X complex, where L10 forms an elongated spine to which 2 to 4 L12 dimers bind in a sequential fashion. Binds GTP-bound translation factors.

In terms of biological role, forms part of the ribosomal stalk which helps the ribosome interact with GTP-bound translation factors. Is thus essential for accurate translation. The sequence is that of Large ribosomal subunit protein bL12 from Ureaplasma urealyticum serovar 10 (strain ATCC 33699 / Western).